Consider the following 193-residue polypeptide: Ion-translocating oxidoreductase complex subunit A (193 aa).

Helical transmembrane passes span 5-25 (LLLF…FLGL), 47-67 (FVMT…LIPL), 72-92 (LRTL…EMVV), 102-122 (LLGI…VALL), 134-154 (ALYG…FAAI), and 171-191 (AIAL…SGLV).

This sequence belongs to the NqrDE/RnfAE family. The complex is composed of six subunits: RnfA, RnfB, RnfC, RnfD, RnfE and RnfG.

Its subcellular location is the cell inner membrane. In terms of biological role, part of a membrane-bound complex that couples electron transfer with translocation of ions across the membrane. This is Ion-translocating oxidoreductase complex subunit A from Citrobacter koseri (strain ATCC BAA-895 / CDC 4225-83 / SGSC4696).